The chain runs to 85 residues: Defensin-like protein 76 (85 aa).

A signal peptide spans 1-27 (MQNQKHSHILTAITIVLLFAMAAKINA). 4 disulfide bridges follow: Cys35–Cys70, Cys40–Cys59, Cys44–Cys68, and Cys48–Cys69.

The protein belongs to the DEFL family.

Its subcellular location is the secreted. In Arabidopsis thaliana (Mouse-ear cress), this protein is Defensin-like protein 76 (LCR86).